The following is a 296-amino-acid chain: Large ribosomal subunit protein uL29m (296 aa).

The transit peptide at methionine 1–threonine 19 directs the protein to the mitochondrion.

This sequence belongs to the universal ribosomal protein uL29 family. As to quaternary structure, component of the mitochondrial large ribosomal subunit. Mature mitochondrial ribosomes consist of a small (37S) and a large (54S) subunit. The 37S subunit contains at least 33 different proteins and 1 molecule of RNA (15S). The 54S subunit contains at least 45 different proteins and 1 molecule of RNA (21S).

The protein localises to the mitochondrion. The sequence is that of Large ribosomal subunit protein uL29m (MRPL4) from Lodderomyces elongisporus (strain ATCC 11503 / CBS 2605 / JCM 1781 / NBRC 1676 / NRRL YB-4239) (Yeast).